The sequence spans 234 residues: MRYGFFDISQDFITIFCPKKTLKNCMFGLIGSRTQATLRQEKNQNFSFFVNEANEIAGFNFFDIKKSFRRGLISHHFTAGLNYPSLKLVKKISELLNYDLTPLAKKVPFVVCEVISAIPIPNTHLKRCKVNTGSNKSLDVVCGADNVRVGLKTVLVHVGGVLPDGTIIKKAKIAGYDSMGMLCSEKELNLKPKNQGIIEIKSHIKIGKSFLDVYLNNSEKFSAWVSTKKRVTGN.

The tRNA-binding domain occupies 103–211 (LAKKVPFVVC…SHIKIGKSFL (109 aa)).

This is an uncharacterized protein from Mycoplasma pneumoniae (strain ATCC 29342 / M129 / Subtype 1) (Mycoplasmoides pneumoniae).